Here is a 492-residue protein sequence, read N- to C-terminus: ATP synthase subunit beta, plastid (492 aa).

Residue 170–177 (GGAGVGKT) coordinates ATP.

This sequence belongs to the ATPase alpha/beta chains family. F-type ATPases have 2 components, CF(1) - the catalytic core - and CF(0) - the membrane proton channel. CF(1) has five subunits: alpha(3), beta(3), gamma(1), delta(1), epsilon(1). CF(0) has four main subunits: a(1), b(1), b'(1) and c(9-12).

It localises to the plastid membrane. The catalysed reaction is ATP + H2O + 4 H(+)(in) = ADP + phosphate + 5 H(+)(out). Functionally, produces ATP from ADP in the presence of a proton gradient across the membrane. The catalytic sites are hosted primarily by the beta subunits. This chain is ATP synthase subunit beta, plastid, found in Aneura mirabilis (Parasitic liverwort).